The primary structure comprises 285 residues: Putative sugar uptake protein lmo0169 (285 aa).

10 helical membrane passes run 5-24 (IALI…SKIG), 31-48 (IIGT…VFIF), 53-71 (YTAT…WSLG), 84-106 (VSKT…GVFA), 116-135 (LVLG…LTSY), 151-173 (IITL…WFDI), 178-195 (AILP…LFSI), 207-226 (WLNM…LLFS), 232-254 (IATG…ILFL), and 263-282 (LILV…MIGI).

The protein belongs to the GRP transporter (TC 2.A.7.5) family.

The protein localises to the cell membrane. This chain is Putative sugar uptake protein lmo0169, found in Listeria monocytogenes serovar 1/2a (strain ATCC BAA-679 / EGD-e).